A 61-amino-acid chain; its full sequence is Small ribosomal subunit protein uS14 (61 aa).

Cys-24, Cys-27, Cys-40, and Cys-43 together coordinate Zn(2+).

It belongs to the universal ribosomal protein uS14 family. Zinc-binding uS14 subfamily. Part of the 30S ribosomal subunit. Contacts proteins S3 and S10. It depends on Zn(2+) as a cofactor.

In terms of biological role, binds 16S rRNA, required for the assembly of 30S particles and may also be responsible for determining the conformation of the 16S rRNA at the A site. This Streptococcus thermophilus (strain ATCC BAA-491 / LMD-9) protein is Small ribosomal subunit protein uS14.